Here is a 120-residue protein sequence, read N- to C-terminus: U13-lycotoxin-Ls1c (120 aa).

Residues 1-16 form the signal peptide; that stretch reads MKILFVLISILYAVYC. A propeptide spanning residues 17 to 54 is cleaved from the precursor; the sequence is FSSEEDVDSAYLANELEPVEDINSEQYAALEPKEEQER. 3 cysteine pairs are disulfide-bonded: C56–C70, C69–C87, and C78–C85. Residues 56-95 form the Agouti domain; the sequence is CADMGQDRKDDCDCCLNIATCNCWFGRYFCSCTFGDYQTC.

It belongs to the neurotoxin 05 (agouti) family. Post-translationally, contains 5 disulfide bonds. Expressed by the venom gland.

The protein localises to the secreted. This chain is U13-lycotoxin-Ls1c, found in Lycosa singoriensis (Wolf spider).